Here is a 1147-residue protein sequence, read N- to C-terminus: Probable phospholipid-transporting ATPase IIB (1147 aa).

Topologically, residues 1 to 146 (MADQIPLYPV…NQKYNVFTFI (146 aa)) are cytoplasmic. A helical transmembrane segment spans residues 147 to 168 (PGVLYEQFKFFLNLYFLVISCS). Over 169-173 (QFVPA) the chain is Extracellular. Residues 174-196 (LKIGYLYTYWAPLGFVLAVTMTR) traverse the membrane as a helical segment. Residues 197–380 (EAIDEFRRFQ…GLLDLELNRL (184 aa)) lie on the Cytoplasmic side of the membrane. The chain crosses the membrane as a helical span at residues 381–401 (TKALFLALVALSIVMVTLQGF). Residues 402-409 (VGPWYRNL) are Extracellular-facing. The chain crosses the membrane as a helical span at residues 410–431 (FRFLLLFSYIIPISLRVNLDMG). Residues 432–930 (KAVYGWMMMK…GRNSYKRSAA (499 aa)) lie on the Cytoplasmic side of the membrane. Residue D468 is the 4-aspartylphosphate intermediate of the active site. D468, K469, and T470 together coordinate ATP. D468 is a binding site for Mg(2+). Mg(2+) is bound at residue T470. The interval 503-535 (RDSYSQMQSQAGGNNTGSTPLRKAQSSAPKVRK) is disordered. Over residues 505–530 (SYSQMQSQAGGNNTGSTPLRKAQSSA) the composition is skewed to polar residues. Positions 591, 633, 638, 657, 686, 687, 766, 767, 768, 848, and 854 each coordinate ATP. D874 contributes to the Mg(2+) binding site. Residues N877 and D878 each coordinate ATP. D878 is a binding site for Mg(2+). A helical transmembrane segment spans residues 931–951 (LGQFVMHRGLIISTMQAVFSS). Over 952–963 (VFYFASVPLYQG) the chain is Extracellular. A helical membrane pass occupies residues 964–982 (FLMVGYATIYTMFPVFSLV). The Cytoplasmic portion of the chain corresponds to 983–1012 (LDQDVKPEMAMLYPELYKDLTKGRSLSFKT). Residues 1013 to 1031 (FLIWVLISIYQGGILMYGA) form a helical membrane-spanning segment. At 1032–1038 (LVLFESE) the chain is on the extracellular side. The helical transmembrane segment at 1039–1061 (FVHVVAISFTALILTELLMVALT) threads the bilayer. Over 1062-1067 (VRTWHW) the chain is Cytoplasmic. A helical transmembrane segment spans residues 1068–1088 (LMVVAEFLSLGCYVSSLAFLN). The Extracellular segment spans residues 1089-1105 (EYFGIGRVSFGAFLDVA). The chain crosses the membrane as a helical span at residues 1106–1130 (FITTVTFLWKVSAITVVSCLPLYVL). Over 1131–1147 (KYLRRKLSPPSYCKLAS) the chain is Cytoplasmic.

The protein belongs to the cation transport ATPase (P-type) (TC 3.A.3) family. Type IV subfamily. Mg(2+) serves as cofactor.

The protein localises to the golgi apparatus. It localises to the trans-Golgi network membrane. It carries out the reaction ATP + H2O + phospholipidSide 1 = ADP + phosphate + phospholipidSide 2.. This Homo sapiens (Human) protein is Probable phospholipid-transporting ATPase IIB (ATP9B).